We begin with the raw amino-acid sequence, 339 residues long: Heat-inducible transcription repressor HrcA (339 aa).

This sequence belongs to the HrcA family.

Negative regulator of class I heat shock genes (grpE-dnaK-dnaJ and groELS operons). Prevents heat-shock induction of these operons. In Clostridium perfringens (strain ATCC 13124 / DSM 756 / JCM 1290 / NCIMB 6125 / NCTC 8237 / Type A), this protein is Heat-inducible transcription repressor HrcA.